Consider the following 103-residue polypeptide: Small ribosomal subunit protein uS10 (103 aa).

This sequence belongs to the universal ribosomal protein uS10 family. As to quaternary structure, part of the 30S ribosomal subunit.

Its function is as follows. Involved in the binding of tRNA to the ribosomes. The sequence is that of Small ribosomal subunit protein uS10 from Psychrobacter arcticus (strain DSM 17307 / VKM B-2377 / 273-4).